Here is a 203-residue protein sequence, read N- to C-terminus: Urease accessory protein UreG (203 aa).

14–21 is a binding site for GTP; sequence GPVGSGKT.

Belongs to the SIMIBI class G3E GTPase family. UreG subfamily. In terms of assembly, homodimer. UreD, UreF and UreG form a complex that acts as a GTP-hydrolysis-dependent molecular chaperone, activating the urease apoprotein by helping to assemble the nickel containing metallocenter of UreC. The UreE protein probably delivers the nickel.

Its subcellular location is the cytoplasm. Its function is as follows. Facilitates the functional incorporation of the urease nickel metallocenter. This process requires GTP hydrolysis, probably effectuated by UreG. The sequence is that of Urease accessory protein UreG from Sinorhizobium medicae (strain WSM419) (Ensifer medicae).